The chain runs to 538 residues: Bifunctional purine biosynthesis protein PurH (538 aa).

Residues 8–158 enclose the MGS-like domain; it reads IPAPDLVPVR…KNHAYVAIVT (151 aa).

The protein belongs to the PurH family.

It carries out the reaction (6R)-10-formyltetrahydrofolate + 5-amino-1-(5-phospho-beta-D-ribosyl)imidazole-4-carboxamide = 5-formamido-1-(5-phospho-D-ribosyl)imidazole-4-carboxamide + (6S)-5,6,7,8-tetrahydrofolate. It catalyses the reaction IMP + H2O = 5-formamido-1-(5-phospho-D-ribosyl)imidazole-4-carboxamide. It participates in purine metabolism; IMP biosynthesis via de novo pathway; 5-formamido-1-(5-phospho-D-ribosyl)imidazole-4-carboxamide from 5-amino-1-(5-phospho-D-ribosyl)imidazole-4-carboxamide (10-formyl THF route): step 1/1. Its pathway is purine metabolism; IMP biosynthesis via de novo pathway; IMP from 5-formamido-1-(5-phospho-D-ribosyl)imidazole-4-carboxamide: step 1/1. This chain is Bifunctional purine biosynthesis protein PurH, found in Mesorhizobium japonicum (strain LMG 29417 / CECT 9101 / MAFF 303099) (Mesorhizobium loti (strain MAFF 303099)).